The primary structure comprises 250 residues: DNA repair protein RecO (250 aa).

Belongs to the RecO family.

In terms of biological role, involved in DNA repair and RecF pathway recombination. This is DNA repair protein RecO from Staphylococcus aureus (strain COL).